A 921-amino-acid chain; its full sequence is Probable dipeptidyl-aminopeptidase B (921 aa).

Disordered stretches follow at residues 1–33 and 45–66; these read MAGHPEENAQLLSTEQESMSRNSSDSVASTAST and VAANGSEKPTMVTPKFPPRGER. Over 1–109 the chain is Cytoplasmic; the sequence is MAGHPEENAQ…NKSVDKKLRR (109 aa). The span at 10 to 22 shows a compositional bias: polar residues; that stretch reads QLLSTEQESMSRN. Residues 23–33 show a composition bias toward low complexity; that stretch reads SSDSVASTAST. A helical; Signal-anchor for type II membrane protein membrane pass occupies residues 110 to 130; sequence LIWIIGGVFIGAWVLALFIFL. Topologically, residues 131 to 921 are vacuolar; the sequence is GKQAYKHSSE…VPLEIDAAKV (791 aa). Positions 138–157 are disordered; the sequence is SSESPHDPQATSSRGSGKKV. A glycan (N-linked (GlcNAc...) asparagine) is linked at Asn362. Residue Ser768 is the Charge relay system of the active site. N-linked (GlcNAc...) asparagine glycosylation occurs at Asn822. Active-site charge relay system residues include Asp845 and His878.

Belongs to the peptidase S9B family.

The protein localises to the vacuole membrane. The enzyme catalyses Release of an N-terminal dipeptide, Xaa-Yaa-|-Zaa-, from a polypeptide, preferentially when Yaa is Pro, provided Zaa is neither Pro nor hydroxyproline.. Type IV dipeptidyl-peptidase which removes N-terminal dipeptides sequentially from polypeptides having unsubstituted N-termini provided that the penultimate residue is proline. This is Probable dipeptidyl-aminopeptidase B (dapB) from Botryotinia fuckeliana (strain B05.10) (Noble rot fungus).